The sequence spans 312 residues: tRNA pseudouridine synthase B (312 aa).

Residue Asp46 is the Nucleophile of the active site. Tyr74, Tyr177, and Leu198 together coordinate substrate.

Belongs to the pseudouridine synthase TruB family. Type 1 subfamily.

The enzyme catalyses uridine(55) in tRNA = pseudouridine(55) in tRNA. In terms of biological role, responsible for synthesis of pseudouridine from uracil-55 in the psi GC loop of transfer RNAs. This is tRNA pseudouridine synthase B from Buchnera aphidicola subsp. Schizaphis graminum (strain Sg).